Here is a 634-residue protein sequence, read N- to C-terminus: Ras and EF-hand domain-containing protein homolog (634 aa).

2 consecutive EF-hand domains span residues 5 to 33 (DVENLFSLCDSESKGFLTMEDLKKVCPQL) and 33 to 68 (LDDNDLRFIFNELDRDGSGKIEKMEFLQGFQETVQH). 5 residues coordinate Ca(2+): D46, D48, S50, K52, and E57. A coiled-coil region spans residues 169–310 (LSEKKHENER…RADFDQKQDE (142 aa)). Disordered stretches follow at residues 216-237 (ERERLTKEKEEMRERMSEEMSE) and 308-328 (QDELSARRDQASHATEESESV). Residues 449–454 (AVGKSS), 552–555 (NKVD), and 585–586 (AL) each bind GTP. A propeptide spans 632-634 (RGS) (removed in mature form).

It belongs to the small GTPase superfamily. Rab family. Homodimer.

It localises to the cytoplasm. It is found in the perinuclear region. Its function is as follows. Binds GTP and GDP. Plays a role in uterine seam cell development. The chain is Ras and EF-hand domain-containing protein homolog from Caenorhabditis briggsae.